The sequence spans 384 residues: Glycerol 3-phosphate oxidase (384 aa).

Positions 1–15 (METRDVLIVGGGVIG) are cleaved as a signal peptide. Ile-14 is a binding site for FAD. The N-palmitoyl cysteine moiety is linked to residue Cys-16. Residue Cys-16 is the site of S-diacylglycerol cysteine attachment. Residues Glu-33, 42-43 (TS), and 47-49 (SGV) each bind FAD. Residues Ser-47 and His-51 each coordinate sn-glycerol 3-phosphate. The active-site Proton acceptor is the His-51. Val-177 contacts FAD. Lys-258 and Arg-320 together coordinate sn-glycerol 3-phosphate. 346–347 (MK) serves as a coordination point for FAD. Ser-348 contributes to the sn-glycerol 3-phosphate binding site. Residue Thr-352 participates in FAD binding.

As to quaternary structure, monomer. FAD serves as cofactor.

Its subcellular location is the cytoplasm. It is found in the cell membrane. It catalyses the reaction sn-glycerol 3-phosphate + O2 = dihydroxyacetone phosphate + H2O2. It functions in the pathway polyol metabolism; glycerol degradation via glycerol kinase pathway; glycerone phosphate from sn-glycerol 3-phosphate (aerobic route): step 1/1. Functionally, catalyzes the oxidation of glycerol 3-phosphate to dihydroxyacetone phosphate (DHAP), with a reduction of O2 to H2O2. The formation of hydrogen peroxide by this enzyme is crucial for cytotoxic effects of M.pneumoniae on host cells. Is involved in the metabolism of glycerol and is essential for glycerol utilization; glycerol is one of the few carbon sources that can be utilized by M.pneumoniae for growth. To a lesser extent, is also able to use glyceraldehyde 3-phosphate (GAP), an intermediate in the glycolysis pathway, as a substrate (but the structure of the product has not been elucidated). Therefore, in the absence of glycerol, GAP may serve as a substrate in the GlpO reaction to supply H2O2 during mycoplasma infection. Does not show any dehydrogenase activity with NAD(+). This chain is Glycerol 3-phosphate oxidase, found in Mycoplasma pneumoniae (strain ATCC 29342 / M129 / Subtype 1) (Mycoplasmoides pneumoniae).